We begin with the raw amino-acid sequence, 186 residues long: Ribosome-recycling factor (186 aa).

Belongs to the RRF family.

It is found in the cytoplasm. Responsible for the release of ribosomes from messenger RNA at the termination of protein biosynthesis. May increase the efficiency of translation by recycling ribosomes from one round of translation to another. In Cytophaga hutchinsonii (strain ATCC 33406 / DSM 1761 / CIP 103989 / NBRC 15051 / NCIMB 9469 / D465), this protein is Ribosome-recycling factor.